Here is a 142-residue protein sequence, read N- to C-terminus: Nucleoside diphosphate kinase (142 aa).

Lys11, Phe59, Arg87, Thr93, Arg104, and Asn114 together coordinate ATP. The active-site Pros-phosphohistidine intermediate is the His117.

The protein belongs to the NDK family. As to quaternary structure, homotetramer. Requires Mg(2+) as cofactor.

The protein resides in the cytoplasm. The catalysed reaction is a 2'-deoxyribonucleoside 5'-diphosphate + ATP = a 2'-deoxyribonucleoside 5'-triphosphate + ADP. It catalyses the reaction a ribonucleoside 5'-diphosphate + ATP = a ribonucleoside 5'-triphosphate + ADP. Major role in the synthesis of nucleoside triphosphates other than ATP. The ATP gamma phosphate is transferred to the NDP beta phosphate via a ping-pong mechanism, using a phosphorylated active-site intermediate. In Photobacterium profundum (strain SS9), this protein is Nucleoside diphosphate kinase.